A 123-amino-acid polypeptide reads, in one-letter code: Cell division protein SepF (123 aa).

This sequence belongs to the SepF family. As to quaternary structure, homodimer. Interacts with FtsZ.

It is found in the cytoplasm. Its function is as follows. Cell division protein that is part of the divisome complex and is recruited early to the Z-ring. Probably stimulates Z-ring formation, perhaps through the cross-linking of FtsZ protofilaments. Its function overlaps with FtsA. The protein is Cell division protein SepF of Tropheryma whipplei (strain TW08/27) (Whipple's bacillus).